The following is a 612-amino-acid chain: MIIRHLSENIINQIAAGEVIERPANVVKELVENAIDAGATRIEIVTANGGKSFIKVSDNGCGIPADQLTLAISRHCTSKITDDVHNIYFLGFRGEALPSIGSVAKLKLTSRTQEAENATEIIVTAGKIIGPKPAAANPGTIVEVRDLFFVTPARLKFMKTDRAETNAISDMIKRIAIAFPHIRFSLSGLDRTSMELPATANSTQGQLQRITQIMGKEFAPNSIALNAKRESIRLTGFACLPSFNRSNSLHQFAYVNRRPVRDKFLWGTIRGAYADVMARDRYPVSILFIDLPPADVDVNVHPTKADVRFRDPGLIRGLIVGAIHEALHQIGVRPASTCSEAMLSAFQTSQPLGTFKSTHQTFSSQHHHLASAAASPLHKPLDATNFVNLREEAVPLMECLDMPSGDICTANTTPSSEELHYPLGAARAQIHKNYIIAQTQDSLIIVDQHAAHERLVYEALKDALYSKPLPSQLLLIPEIVELSEEDATCLLTHKDALQKFGLGIESFGPGAIVVRETPSMLGEVNVQALIKDLADEAAEYDTTNNLKAMIDCVAATMACHGSIRSGRLLRAEEMNALLRQIEATPHTGTCNHGRPTYIELKLADIERLFGRK.

Belongs to the DNA mismatch repair MutL/HexB family.

This protein is involved in the repair of mismatches in DNA. It is required for dam-dependent methyl-directed DNA mismatch repair. May act as a 'molecular matchmaker', a protein that promotes the formation of a stable complex between two or more DNA-binding proteins in an ATP-dependent manner without itself being part of a final effector complex. This is DNA mismatch repair protein MutL from Bartonella quintana (strain Toulouse) (Rochalimaea quintana).